Consider the following 533-residue polypeptide: Leucine-rich glioma-inactivated protein 1 (533 aa).

A signal peptide spans 1–34 (MESERSQRMGNACIPLKRIAYCLCLLSALLLTEG). The 38-residue stretch at 35 to 72 (KKPAKPKCPAVCTCTKDNALCENARSIPRTVPPDVISL) folds into the LRRNT domain. LRR repeat units lie at residues 92–113 (HLEY…TFRG) and 116–137 (SLIH…IFKG). The LRRCT domain occupies 149 to 199 (NSFNCDCKLKWLVEWLSHTNATVEDIYCEGPPEYKKRKINSLSSKDFDCII). Residue asparagine 168 is glycosylated (N-linked (GlcNAc...) asparagine). EAR repeat units lie at residues 201 to 243 (EFAK…EWDH), 247 to 289 (TFRN…KRDS), 293 to 340 (KFIK…KWNG), 342 to 391 (GFYS…QWNK), 395 to 438 (LFTN…KWGG), 440 to 482 (SFQD…NWDA), and 486 to 528 (KFVK…KHVI). Asparagine 253 carries an N-linked (GlcNAc...) asparagine glycan. The N-linked (GlcNAc...) asparagine glycan is linked to asparagine 398.

Oligomer. Interacts with KCNA1 within a complex containing KCNA1, KCNA4 and KCNAB1. Part of a complex containing ADAM22, DLG4/PSD95 and CACNG2 (stargazin). Can bind to ADAM11 and ADAM23. Glycosylated.

It is found in the secreted. The protein localises to the synapse. Its subcellular location is the cytoplasm. Regulates voltage-gated potassium channels assembled from KCNA1, KCNA4 and KCNAB1. It slows down channel inactivation by precluding channel closure mediated by the KCNAB1 subunit. Ligand for ADAM22 that positively regulates synaptic transmission mediated by AMPA-type glutamate receptors. Plays a role in suppressing the production of MMP1/3 through the phosphatidylinositol 3-kinase/ERK pathway. This is Leucine-rich glioma-inactivated protein 1 (LGI1) from Bos taurus (Bovine).